The chain runs to 170 residues: Zinc finger A20 and AN1 domain-containing stress-associated protein 6 (170 aa).

The segment at 10–44 adopts an A20-type zinc-finger fold; the sequence is PESNRLCVNNCGFLGSSATMNLCSNCYGDLCLKQQ. Cys16, Cys20, Cys32, and Cys35 together coordinate Zn(2+). The disordered stretch occupies residues 53-76; the sequence is TVESSLSVSPPSSSSSEISSPIIP. Residues 105 to 151 form an AN1-type zinc finger; sequence QQRPNRCTTCRKRVGLTGFKCRCGTMFCGVHRYPEIHGCSYDFKSAG. Zn(2+) contacts are provided by Cys111, Cys114, Cys125, Cys127, Cys132, His135, His141, and Cys143.

Its function is as follows. May be involved in environmental stress response. This chain is Zinc finger A20 and AN1 domain-containing stress-associated protein 6 (SAP6), found in Arabidopsis thaliana (Mouse-ear cress).